The following is a 434-amino-acid chain: MALQTTNTWETLAQLLPSRNHDQDFWWKVTGRQLAVLLEAAGYPIERQYNTLLFHYHWAIPYLGPAPASGVAKWPSQLSVDGSPIEYSWKWNTKSKAPDVRYTMEPMSEFTGTKLDPLNQRAFRELLHKLSQFVPDVDLAPTDYFMSTLFDHDRSVLMKAVDDGVPLQFSSTALAFEFLDKGLLLKTYYAPRKLETGHFVLKDWDTAIRGYYPESKALDIVYEFLKTSPEGELMNPYHLAVDNVKDGRLKFYFQSPHRTFTSVREILTIGGRVQREGLEEQLLSLRDLLNALTGQSPDFPEDGEPPIVEEDVTADLDTDGHPELMSGYLYYFDIAPGAALPEIRFYVPIRRYCKSDLDLAQSLTAWMAANGRGTYCQQYLDLVHSLAEHREISKDRGLQRYIACLLAKNGEIEVTTYLAPETYEQVRRSQKTAV.

L-tryptophan is bound at residue Glu86. Residues Arg101, Arg248, Lys250, Tyr252, and Tyr346 each coordinate substrate.

This sequence belongs to the tryptophan dimethylallyltransferase family.

Its pathway is secondary metabolite biosynthesis. Its function is as follows. Prenyltransferase; part of the gene cluster that mediates the biosynthesis of flavoglaucin and congeners (including aspergin, dihydroauroglaucin and auroglaucin), prenylated salicylaldehyde derivatives carrying a saturated or an unsaturated C-7 side chain. The PKS fogA releases the carboxylic acid (8E,10E,12E)-3,5,7-trihydroxytetradeca-8,10,12-trienoic acid as its product, as well as derivatives with one and two double bonds. FogA is indeed able to reduce the initial triketide, thus being at least partially responsible for the differently saturated heptyl side chains of flavoglaucin congeners. The oxidoreductases fogB, fogC and fogD modify the nascent polyketide in fogA-bound form and, together, fogA, fogB, fogC and fogD are necessary for the formation of the aromatic core and the cyclized PKS products are released as salicyl alcohols. In particular, fogB is responsible for oxidation of a hydroxyl group or reduction of remaining double bond(s) at the C-7 residue whereas fogD is probably involved in the reductive release of the modified PKS products. The cytochrome P450 monooxygenase fogE is then responsible for the hydroxylation at C-3 of the benzene ring. The fogE products are substrates of the prenyltransferase fogH and the prenylated benzyl alcohols are subsequently oxidized by the fogF to produce the final aryl aldehydes flavoglaucin and congeners. The short-chain dehydrogenase fogG does not seem to be involved in the biosynthesis of the prenylated salicylaldehyde derivatives. The sequence is that of Prenyltransferase fogH from Aspergillus ruber (strain CBS 135680).